The chain runs to 210 residues: Orotate phosphoribosyltransferase (210 aa).

Residues R97, K101, H103, and 123–131 contribute to the 5-phospho-alpha-D-ribose 1-diphosphate site; that span reads EDLISTGGS. S127 is a binding site for orotate.

It belongs to the purine/pyrimidine phosphoribosyltransferase family. PyrE subfamily. In terms of assembly, homodimer. Mg(2+) serves as cofactor.

It catalyses the reaction orotidine 5'-phosphate + diphosphate = orotate + 5-phospho-alpha-D-ribose 1-diphosphate. It participates in pyrimidine metabolism; UMP biosynthesis via de novo pathway; UMP from orotate: step 1/2. Its function is as follows. Catalyzes the transfer of a ribosyl phosphate group from 5-phosphoribose 1-diphosphate to orotate, leading to the formation of orotidine monophosphate (OMP). This chain is Orotate phosphoribosyltransferase, found in Enterococcus faecalis (strain ATCC 700802 / V583).